The following is a 763-amino-acid chain: MSSSSRRPARRAALTARSSYDESLVDAELESYLGNARSRRISRLRRLSADERQRETETEALIALSLGFPIDELLPAERPLLPAPVAAAPNDYIVVRNHILASWRADPRVPLPRSRVQETVAASYDNLVAVAHGFLAREGHINFGVSAAFPASPPPDAPQRLAASVLVVGAGLAGLAAARQLLRFGLRVLVLEGRARPGGRVYTTHLGGDQAAVELGGSVITGIHTNPLGVLARQLGIPLHKVRDSCPLYHHDGRTVDMKLDRSMDLVFNTLLEHATRLREYLKKAAEGISLGEGIERLRRFYKVAKSVEEREVLDWHLANLEFSNAGCLSELSLAHWDQDDQYEMGGDHCFLAGGNARLVHALCDGVPVLYEKTVKRIEHGEDGVSITVEGGQVFKADMALCTAPLGVLKSRSIIFEPELPERKLEAIQRLGFGLLNKVAMVFPHVFWDEEIDTFGCLNKERSKRGEFFLFYSYHTVSGGAVLIALVAGEAALEFEKVDPAVALHRVLGILKGIYGPKGVTVPDPIQSCCTRWGSDPLCSGSYSHIRVGSSGTDYDILAESVNDRLFFAGEATNRAYPATMHGALLSGLREASKILHASESRLNSDYKKYALQKSIRLINNVLDDLFMEPDLECGRFSFVFSYITPEEEQAPGLARITLEKPLLLPSKKRKVKGNQKDQDPVAEKIDQEVFYLYATVSQEQATELLECDNDKSRIAVLCKDLGVKLMGYDSTYDVCSHLISSISRAQKARKRLQGPKSLKTGL.

The SWIRM domain maps to 53–152; the sequence is QRETETEALI…FGVSAAFPAS (100 aa). E192, R194, R200, and E571 together coordinate FAD.

It belongs to the flavin monoamine oxidase family. Requires FAD as cofactor.

Probable histone demethylase. The chain is Lysine-specific histone demethylase 1 homolog 2 from Oryza sativa subsp. japonica (Rice).